Here is a 427-residue protein sequence, read N- to C-terminus: Glutamyl-tRNA(Gln) amidotransferase subunit D (427 aa).

Residues 1–18 show a composition bias toward basic and acidic residues; sequence MTADPGDRVRVTHGDASH. The disordered stretch occupies residues 1 to 20; sequence MTADPGDRVRVTHGDASHEG. Positions 80–413 constitute an Asparaginase/glutaminase domain; that stretch reads PTIALISTGG…DDPEAAMQES (334 aa). Active-site residues include Thr90, Thr166, Asp167, and Lys243.

It belongs to the asparaginase 1 family. GatD subfamily. In terms of assembly, heterodimer of GatD and GatE.

The catalysed reaction is L-glutamyl-tRNA(Gln) + L-glutamine + ATP + H2O = L-glutaminyl-tRNA(Gln) + L-glutamate + ADP + phosphate + H(+). In terms of biological role, allows the formation of correctly charged Gln-tRNA(Gln) through the transamidation of misacylated Glu-tRNA(Gln) in organisms which lack glutaminyl-tRNA synthetase. The reaction takes place in the presence of glutamine and ATP through an activated gamma-phospho-Glu-tRNA(Gln). The GatDE system is specific for glutamate and does not act on aspartate. The polypeptide is Glutamyl-tRNA(Gln) amidotransferase subunit D (Halobacterium salinarum (strain ATCC 29341 / DSM 671 / R1)).